We begin with the raw amino-acid sequence, 474 residues long: Trehalose-6-phosphate synthase (474 aa).

Arg10 provides a ligand contact to D-glucose 6-phosphate. Gly22–Gly23 lines the UDP-alpha-D-glucose pocket. D-glucose 6-phosphate is bound by residues Tyr77 and Asp131. Residues Arg263 and Lys268 each coordinate UDP-alpha-D-glucose. Arg301 lines the D-glucose 6-phosphate pocket. Residues Phe340 and Leu366–Glu370 each bind UDP-alpha-D-glucose.

It belongs to the glycosyltransferase 20 family. As to quaternary structure, homotetramer.

It carries out the reaction D-glucose 6-phosphate + UDP-alpha-D-glucose = alpha,alpha-trehalose 6-phosphate + UDP + H(+). It functions in the pathway glycan biosynthesis; trehalose biosynthesis. Functionally, probably involved in the osmoprotection via the biosynthesis of trehalose. Catalyzes the transfer of glucose from UDP-alpha-D-glucose (UDP-Glc) to D-glucose 6-phosphate (Glc-6-P) to form trehalose-6-phosphate. Acts with retention of the anomeric configuration of the UDP-sugar donor. This Escherichia coli O157:H7 protein is Trehalose-6-phosphate synthase.